A 236-amino-acid chain; its full sequence is 2-C-methyl-D-erythritol 4-phosphate cytidylyltransferase (236 aa).

This sequence belongs to the IspD/TarI cytidylyltransferase family. IspD subfamily. In terms of assembly, homodimer.

It catalyses the reaction 2-C-methyl-D-erythritol 4-phosphate + CTP + H(+) = 4-CDP-2-C-methyl-D-erythritol + diphosphate. Its pathway is isoprenoid biosynthesis; isopentenyl diphosphate biosynthesis via DXP pathway; isopentenyl diphosphate from 1-deoxy-D-xylulose 5-phosphate: step 2/6. Functionally, catalyzes the formation of 4-diphosphocytidyl-2-C-methyl-D-erythritol from CTP and 2-C-methyl-D-erythritol 4-phosphate (MEP). This is 2-C-methyl-D-erythritol 4-phosphate cytidylyltransferase from Salmonella arizonae (strain ATCC BAA-731 / CDC346-86 / RSK2980).